The chain runs to 599 residues: Sulfite reductase [NADPH] flavoprotein alpha-component (599 aa).

The region spanning Val-64–Val-202 is the Flavodoxin-like domain. Residues Ser-70–Ala-75, Ser-117–Gly-120, and Leu-153–Cys-162 each bind FMN. The region spanning Asp-234 to Pro-448 is the FAD-binding FR-type domain. Residues Thr-322, Ala-356, Arg-386 to Ser-389, Thr-404 to Gly-406, Tyr-410, and Gly-419 to Ser-422 contribute to the FAD site. NADP(+) is bound by residues Ser-519–Arg-520, Lys-525–Gln-529, and Asp-561. Tyr-599 provides a ligand contact to FAD.

It belongs to the NADPH-dependent sulphite reductase flavoprotein subunit CysJ family. The protein in the N-terminal section; belongs to the flavodoxin family. This sequence in the C-terminal section; belongs to the flavoprotein pyridine nucleotide cytochrome reductase family. In terms of assembly, alpha(8)-beta(8). The alpha component is a flavoprotein, the beta component is a hemoprotein. FAD serves as cofactor. The cofactor is FMN.

It catalyses the reaction hydrogen sulfide + 3 NADP(+) + 3 H2O = sulfite + 3 NADPH + 4 H(+). It functions in the pathway sulfur metabolism; hydrogen sulfide biosynthesis; hydrogen sulfide from sulfite (NADPH route): step 1/1. In terms of biological role, component of the sulfite reductase complex that catalyzes the 6-electron reduction of sulfite to sulfide. This is one of several activities required for the biosynthesis of L-cysteine from sulfate. The flavoprotein component catalyzes the electron flow from NADPH -&gt; FAD -&gt; FMN to the hemoprotein component. The polypeptide is Sulfite reductase [NADPH] flavoprotein alpha-component (Salmonella paratyphi A (strain ATCC 9150 / SARB42)).